We begin with the raw amino-acid sequence, 76 residues long: UPF0291 protein BA_1897/GBAA_1897/BAS1759 (76 aa).

It belongs to the UPF0291 family.

The protein localises to the cytoplasm. In Bacillus anthracis, this protein is UPF0291 protein BA_1897/GBAA_1897/BAS1759.